The primary structure comprises 1106 residues: Carbamoyl phosphate synthase large chain (1106 aa).

The segment at 1–402 (MPRREDIRSV…SFQKALRSLE (402 aa)) is carboxyphosphate synthetic domain. Positions 129, 169, 175, 176, 208, 210, 215, 241, 242, 243, 285, and 299 each coordinate ATP. The region spanning 133 to 328 (KKAMEKIGVR…IAKIAALLSI (196 aa)) is the ATP-grasp 1 domain. Gln285, Glu299, and Asn301 together coordinate Mg(2+). Gln285, Glu299, and Asn301 together coordinate Mn(2+). Residues 403 to 582 (IDRYGFGSDG…YSSYDEEDES (180 aa)) are oligomerization domain. Positions 583-964 (DVTNAKSVMI…AFLKSQYMAG (382 aa)) are carbamoyl phosphate synthetic domain. Residues 707-898 (VEVLEKLKLN…IVKYATRIMM (192 aa)) enclose the ATP-grasp 2 domain. 10 residues coordinate ATP: Arg743, Ser782, Leu784, Glu789, Gly814, Ile815, His816, Ser817, Gln857, and Glu869. Residues Gln857, Glu869, and Asn871 each contribute to the Mg(2+) site. Mn(2+)-binding residues include Gln857, Glu869, and Asn871. The region spanning 965 to 1106 (DELPSQGTVF…QEIHAMPKIL (142 aa)) is the MGS-like domain. The tract at residues 965 to 1106 (DELPSQGTVF…QEIHAMPKIL (142 aa)) is allosteric domain.

It belongs to the CarB family. Composed of two chains; the small (or glutamine) chain promotes the hydrolysis of glutamine to ammonia, which is used by the large (or ammonia) chain to synthesize carbamoyl phosphate. Tetramer of heterodimers (alpha,beta)4. Requires Mg(2+) as cofactor. It depends on Mn(2+) as a cofactor.

It carries out the reaction hydrogencarbonate + L-glutamine + 2 ATP + H2O = carbamoyl phosphate + L-glutamate + 2 ADP + phosphate + 2 H(+). The catalysed reaction is hydrogencarbonate + NH4(+) + 2 ATP = carbamoyl phosphate + 2 ADP + phosphate + 2 H(+). The protein operates within amino-acid biosynthesis; L-arginine biosynthesis; carbamoyl phosphate from bicarbonate: step 1/1. It functions in the pathway pyrimidine metabolism; UMP biosynthesis via de novo pathway; (S)-dihydroorotate from bicarbonate: step 1/3. Large subunit of the glutamine-dependent carbamoyl phosphate synthetase (CPSase). CPSase catalyzes the formation of carbamoyl phosphate from the ammonia moiety of glutamine, carbonate, and phosphate donated by ATP, constituting the first step of 2 biosynthetic pathways, one leading to arginine and/or urea and the other to pyrimidine nucleotides. The large subunit (synthetase) binds the substrates ammonia (free or transferred from glutamine from the small subunit), hydrogencarbonate and ATP and carries out an ATP-coupled ligase reaction, activating hydrogencarbonate by forming carboxy phosphate which reacts with ammonia to form carbamoyl phosphate. In Leptospira interrogans serogroup Icterohaemorrhagiae serovar copenhageni (strain Fiocruz L1-130), this protein is Carbamoyl phosphate synthase large chain.